The primary structure comprises 556 residues: Glucose-6-phosphate isomerase (556 aa).

E360 functions as the Proton donor in the catalytic mechanism. Catalysis depends on residues H391 and K519.

The protein belongs to the GPI family.

The protein localises to the cytoplasm. It carries out the reaction alpha-D-glucose 6-phosphate = beta-D-fructose 6-phosphate. The protein operates within carbohydrate biosynthesis; gluconeogenesis. It participates in carbohydrate degradation; glycolysis; D-glyceraldehyde 3-phosphate and glycerone phosphate from D-glucose: step 2/4. Functionally, catalyzes the reversible isomerization of glucose-6-phosphate to fructose-6-phosphate. The chain is Glucose-6-phosphate isomerase from Acinetobacter baumannii (strain AB0057).